The following is a 149-amino-acid chain: Transthyretin (149 aa).

A signal peptide spans 1 to 20 (MAFHSLLLLCLAGLLFVSEA). Cysteine 32 bears the Sulfocysteine mark. Lysine 37 is an L-thyroxine binding site. Residue glutamate 64 is modified to 4-carboxyglutamate. Residues glutamate 76 and serine 139 each coordinate L-thyroxine.

This sequence belongs to the transthyretin family. Homotetramer. Dimer of dimers. In the homotetramer, subunits assemble around a central channel that can accommodate two ligand molecules. Interacts with RBP4. In terms of processing, sulfonation of the reactive cysteine Cys-32 enhances the stability of the native conformation of TTR, avoiding misassembly of the protein leading to amyloid formation. Detected in plasma (at protein level). Detected in liver.

Its subcellular location is the secreted. Thyroid hormone-binding protein. Probably transports thyroxine from the bloodstream to the brain. This Petaurus breviceps (Australian sugar glider) protein is Transthyretin (TTR).